We begin with the raw amino-acid sequence, 157 residues long: Transcriptional repressor NrdR (157 aa).

Residues 1-21 (MRCPYCGSEDSQVKDSRPAED) are disordered. A zinc finger lies at 3–34 (CPYCGSEDSQVKDSRPAEDGNAIRRRRICPDC). A compositionally biased stretch (basic and acidic residues) spans 11–21 (SQVKDSRPAED). An ATP-cone domain is found at 49–139 (LMIIKKTGRK…VYRDFSHAED (91 aa)).

This sequence belongs to the NrdR family. Zn(2+) serves as cofactor.

Its function is as follows. Negatively regulates transcription of bacterial ribonucleotide reductase nrd genes and operons by binding to NrdR-boxes. The sequence is that of Transcriptional repressor NrdR from Sinorhizobium medicae (strain WSM419) (Ensifer medicae).